The chain runs to 496 residues: Protein RepS (496 aa).

A DNA-binding region spans residues 120–141 (SDILTTAIDLGFMPTLIIKSDK).

Functionally, essential for replication. In Streptococcus pyogenes, this protein is Protein RepS (repS).